A 195-amino-acid chain; its full sequence is Phenoloxidase subunit 1 (195 aa).

His10 serves as a coordination point for Cu cation. N-linked (GlcNAc...) asparagine glycans are attached at residues Asn77, Asn97, and Asn98.

The protein belongs to the tyrosinase family. Heterodimer. The cofactor is Cu(2+).

Its subcellular location is the secreted. The enzyme catalyses 2 L-dopa + O2 = 2 L-dopaquinone + 2 H2O. The catalysed reaction is L-tyrosine + O2 = L-dopaquinone + H2O. Its function is as follows. This is a copper-containing oxidase that functions in the formation of pigments such as melanins and other polyphenolic compounds. Catalyzes the rate-limiting conversions of tyrosine to DOPA, DOPA to DOPA-quinone and possibly 5,6 dihydroxyindole to indole-5'6 quinone. The protein is Phenoloxidase subunit 1 of Simulium damnosum (Black fly).